The primary structure comprises 493 residues: MVLADVGGSISRALAMSSAAVVDESVLRECLNEIARALMQSDVRFKTVCDLQANIRKTVNLEALAAGTNKRRIIETSVGKELCKMLDTGKPAFVPKKGKPNVVMFVGLQGSGKTTTCTKYAHYHQRKGFKPSLVCADTFRAGAFDQLKQNATKAKIPFYGSYMESDPVKIAVEGLEKFRQEKSDLIIIDTSGRHMQEAALFEEMRQVAEATKPDLVIFVMDGSIGQAAFDQAQAFKQSASVGAVIVTKLDGHAKGGGALSAVAATKSPVIFIGTGEHIDDFDVFNVEPFVARLLGRGDLPGLIDKMESIVPADQQSELVAKLSEGAFTLRLLYEQFQNLLKMGPMSQIFSMLPGFSSELMPKGQEKQSKEKFKRYMTIMDSMTPAELDSTNPKLMTESRIIRVARGSGRKVKDVMEMLEEYKRLAKMWSKRNVSKLIPQNGKMSAQAIQKMLKVMPPQVVQQMGGKSGLEALLKQLGGGKDTSKMLAGMRGGA.

Positions 1 to 294 (MVLADVGGSI…NVEPFVARLL (294 aa)) are G-domain. GTP-binding positions include 107 to 114 (GLQGSGKT), 189 to 193 (DTSGR), and 247 to 250 (TKLD). The tract at residues 295–493 (GRGDLPGLID…KMLAGMRGGA (199 aa)) is M-domain.

Belongs to the GTP-binding SRP family. SRP54 subfamily. Component of a signal recognition particle (SRP) complex that consists of a 7SL RNA molecule of 300 nucleotides and six protein subunits: SRP72, SRP68, SRP54, SRP19, SRP14 and SRP9.

The protein localises to the cytoplasm. The protein resides in the endoplasmic reticulum. It carries out the reaction GTP + H2O = GDP + phosphate + H(+). Component of the signal recognition particle (SRP) complex, a ribonucleoprotein complex that mediates the cotranslational targeting of secretory and membrane proteins to the endoplasmic reticulum (ER). As part of the SRP complex, associates with the SRP receptor (SR) component SRPRA to target secretory proteins to the endoplasmic reticulum membrane. Binds to the signal sequence of presecretory proteins when they emerge from the ribosomes. Displays basal GTPase activity, and stimulates reciprocal GTPase activation of the SR subunit SRPRA. Forms a guanosine 5'-triphosphate (GTP)-dependent complex with the SR subunit SRPRA. SR compaction and GTPase mediated rearrangement of SR drive SRP-mediated cotranslational protein translocation into the ER. Requires the presence of SRP9/SRP14 and/or SRP19 to stably interact with RNA. The polypeptide is Signal recognition particle subunit SRP54 3 (SRP54-3) (Hordeum vulgare (Barley)).